A 20-amino-acid polypeptide reads, in one-letter code: Equinatoxin-3 (20 aa).

Residues 3–12 (AVAGAIIKGA) are plays an important role in the hemolytic activity. The N-terminal region stretch occupies residues 11–20 (GAALTFNVLQ).

It belongs to the actinoporin family. Sea anemone subfamily. Octamer or nonamer in membranes. Monomer in the soluble state.

It localises to the secreted. The protein resides in the nematocyst. The protein localises to the target cell membrane. Its function is as follows. Pore-forming protein that forms cations-selective hydrophilic pores of around 1 nm and causes cardiac stimulation and cytolysis. Pore formation is a multi-step process that involves specific recognition of membrane sphingomyelin (but neither cholesterol nor phosphatidylcholine) using aromatic rich region and adjacent phosphocholine (POC) binding site, firm binding to the membrane (mainly driven by hydrophobic interactions) accompanied by the transfer of the N-terminal region to the lipid-water interface and finally pore formation after oligomerization of monomers. Cytolytic effects include red blood cells hemolysis, platelet aggregation and lysis, cytotoxic and cytostatic effects on fibroblasts. Lethality in mammals has been ascribed to severe vasospasm of coronary vessels, cardiac arrhythmia, and inotropic effects. This chain is Equinatoxin-3, found in Actinia equina (Beadlet anemone).